A 347-amino-acid chain; its full sequence is Pre-B-cell leukemia transcription factor 1 (347 aa).

The disordered stretch occupies residues 1–40; sequence MDDQPRLMHSHPGVGMAGHPSLSQHMQDGTGANEGEGGRK. The region spanning 38-232 is the PBC domain; sequence GRKQDIGDIL…VMILRSRFLD (195 aa). A PBC-A region spans residues 45 to 124; sequence DILQQIMTIT…EGVAGPEKGG (80 aa). Positions 127 to 232 are PBC-B; it reads AAAAAAAAAS…VMILRSRFLD (106 aa). The homeobox; TALE-type DNA-binding region spans 233–295; it reads ARRKRRNFNK…NKRIRYKKNI (63 aa). The segment covering 318–331 has biased composition (polar residues); the sequence is VHGSQANSPSTPSS. Positions 318–347 are disordered; that stretch reads VHGSQANSPSTPSSAGGYPSPCYQSDRRIQ.

Belongs to the TALE/PBX homeobox family. As to quaternary structure, forms a heterodimer with meis1; the interaction is necessary for neural fate induction.

The protein localises to the nucleus. Functionally, acts as a transcriptional activator in complex with isoform 2 of meis1, to induce posterior neural and neural crest gene expression, and thereby specify hindbrain and neural crest cell fate. Binds to a highly conserved region in the promoter of the neural crest gene zic3. Required for the nuclear transport or retention of meis1. This chain is Pre-B-cell leukemia transcription factor 1, found in Xenopus tropicalis (Western clawed frog).